The primary structure comprises 246 residues: Bis(5'-nucleosyl)-tetraphosphatase PrpE [asymmetrical] (246 aa).

It belongs to the PrpE family. Ni(2+) serves as cofactor.

It carries out the reaction P(1),P(4)-bis(5'-guanosyl) tetraphosphate + H2O = GMP + GTP + 2 H(+). Asymmetrically hydrolyzes Ap4p to yield AMP and ATP. This Bacillus thuringiensis (strain Al Hakam) protein is Bis(5'-nucleosyl)-tetraphosphatase PrpE [asymmetrical].